The following is a 426-amino-acid chain: Ankyrin repeat-containing protein BDA1 (426 aa).

6 ANK repeats span residues 1–29, 36–65, 70–99, 104–134, 138–167, and 182–212; these read MDSKLLLVTQSGSVDDLYSLIQAAPDILQ, IIHTPLHEASSAGKLDLAMELMILKPSFAK, YGLSPLHLAVENDQVELALELVKVDPSLVR, GGMTPLHLVAKKGDVDLLTDFLLACPESIKD, NGETILHITIMNDKYEQLKVLTGWMQKMRD, and GGNTVLHLAAYENNDKVVKQLVKCLSLDRNI. The next 4 helical transmembrane spans lie at 288–308, 329–349, 355–375, and 380–400; these read ALLVIAALIISATFQTAAQLL, WGCNTVAFSIAILFSFILLPV, WWYFIITVPLVFSYFLLMYMM, and FFFLIIYEGGLFLVYLLVLYV.

The protein localises to the cell membrane. In terms of biological role, involved in plant defense. Required for basal resistance against Pseudomonas syringae pv. tomato DC3000. Required for resistance against nonpathogenic bacteria. May be involved in signaling components that function downstream of SNC2 and upstream of NPR1 and WRKY70 to regulate defense responses. This chain is Ankyrin repeat-containing protein BDA1, found in Arabidopsis thaliana (Mouse-ear cress).